A 328-amino-acid polypeptide reads, in one-letter code: Phosphate acyltransferase (328 aa).

Belongs to the PlsX family. In terms of assembly, homodimer. Probably interacts with PlsY.

The protein resides in the cytoplasm. It carries out the reaction a fatty acyl-[ACP] + phosphate = an acyl phosphate + holo-[ACP]. The protein operates within lipid metabolism; phospholipid metabolism. Its function is as follows. Catalyzes the reversible formation of acyl-phosphate (acyl-PO(4)) from acyl-[acyl-carrier-protein] (acyl-ACP). This enzyme utilizes acyl-ACP as fatty acyl donor, but not acyl-CoA. The protein is Phosphate acyltransferase of Mycoplasmoides gallisepticum (strain R(low / passage 15 / clone 2)) (Mycoplasma gallisepticum).